Here is a 117-residue protein sequence, read N- to C-terminus: MSGEVSHRAGFVAEEAVARIYERADRPVTARRWRGAAGEIDLIARDGAEVIFIEVKKSKSHAAAAARLSRRQMERIYGAASEFLAGEPLGQLTASRFDVALVDGMGRIEIIENAFAA.

It belongs to the UPF0102 family.

The polypeptide is UPF0102 protein Rsph17025_0472 (Cereibacter sphaeroides (strain ATCC 17025 / ATH 2.4.3) (Rhodobacter sphaeroides)).